The chain runs to 124 residues: Membrane magnesium transporter 2 (124 aa).

Residue Met1 is a topological domain, cytoplasmic. Residues 2 to 22 (VAWLWKVLVGVGLSALAHAAF) traverse the membrane as a helical segment. Topologically, residues 23-44 (SAAQHRSHTRLAEMKYEPLPTD) are lumenal. The chain crosses the membrane as a helical span at residues 45-65 (IVLQTLLAFALTCYGVVHTAG). Over 66-124 (DFRDRDATSELKNVTFDTLRNRPSFYVFQHSGSSLLQPSDTTRSSNLNVPSSDDIRLKF) the chain is Cytoplasmic.

It belongs to the membrane magnesium transporter (TC 1.A.67) family.

It is found in the golgi apparatus membrane. Its subcellular location is the early endosome membrane. In terms of biological role, mediates Mg(2+) transport. The polypeptide is Membrane magnesium transporter 2 (Rattus norvegicus (Rat)).